The sequence spans 142 residues: Hemoglobin subunit alpha (142 aa).

Positions 2 to 142 (VLSDANKQEI…LVHQLSSKYR (141 aa)) constitute a Globin domain. His-60 provides a ligand contact to O2. Heme b is bound at residue His-89.

This sequence belongs to the globin family. Heterotetramer of two alpha chains and two beta chains. Red blood cells.

In terms of biological role, involved in oxygen transport from gills to the various peripheral tissues. The sequence is that of Hemoglobin subunit alpha (HBA) from Bathyraja eatonii (Eaton's skate).